The primary structure comprises 409 residues: Serine/threonine transporter SstT (409 aa).

A run of 9 helical transmembrane segments spans residues 17–37, 49–69, 83–103, 142–162, 180–200, 218–238, 301–321, 331–351, and 357–377; these read LVGQ…FFPA, FVSA…MASI, ILLL…IASF, ALIS…GIAF, VSLI…GLVA, LVVL…LIVF, GAAI…GIAV, VVAS…LLLI, and LFGI…IIAI.

Belongs to the dicarboxylate/amino acid:cation symporter (DAACS) (TC 2.A.23) family.

Its subcellular location is the cell inner membrane. It catalyses the reaction L-serine(in) + Na(+)(in) = L-serine(out) + Na(+)(out). It carries out the reaction L-threonine(in) + Na(+)(in) = L-threonine(out) + Na(+)(out). In terms of biological role, involved in the import of serine and threonine into the cell, with the concomitant import of sodium (symport system). The protein is Serine/threonine transporter SstT of Pseudomonas aeruginosa (strain LESB58).